A 539-amino-acid polypeptide reads, in one-letter code: Chaperonin GroEL (539 aa).

ATP-binding positions include T30–P33, D87–T91, G414, D479–L481, and D495.

The protein belongs to the chaperonin (HSP60) family. Forms a cylinder of 14 subunits composed of two heptameric rings stacked back-to-back. Interacts with the co-chaperonin GroES.

The protein localises to the cytoplasm. It carries out the reaction ATP + H2O + a folded polypeptide = ADP + phosphate + an unfolded polypeptide.. Together with its co-chaperonin GroES, plays an essential role in assisting protein folding. The GroEL-GroES system forms a nano-cage that allows encapsulation of the non-native substrate proteins and provides a physical environment optimized to promote and accelerate protein folding. This Caldicellulosiruptor bescii (strain ATCC BAA-1888 / DSM 6725 / KCTC 15123 / Z-1320) (Anaerocellum thermophilum) protein is Chaperonin GroEL.